A 198-amino-acid polypeptide reads, in one-letter code: MKQPSALSALVEALRALPGVGPKSAQRMAYHLMQHDREGAERLGRSLLFATEHLRHCDKCNTFTEAQICEVCSDEERDPTLLCVVETPADQIMLEQTMTYRGLYFVLMGRLSPLDGIGPKEIHFDRLVRRASDGIVKEVVLATNFTNEGEATAHYLGQTLKARGLAVTRLARGVPVGGELEYVDAGTIARAMLDRRTM.

Residues 57 to 72 (CDKCNTFTEAQICEVC) form a C4-type zinc finger. The region spanning 80–175 (TLLCVVETPA…AVTRLARGVP (96 aa)) is the Toprim domain.

It belongs to the RecR family.

In terms of biological role, may play a role in DNA repair. It seems to be involved in an RecBC-independent recombinational process of DNA repair. It may act with RecF and RecO. The polypeptide is Recombination protein RecR (Burkholderia multivorans (strain ATCC 17616 / 249)).